The primary structure comprises 164 residues: MTLDDDLNRIAEQEKELSFDAFDLTTAWQLGKLLQELATERCLGVAIDVTLHSMPVFYAALPGVTPDNVNWVRRKRNMVFRYFRSSYASGLKLKKDGKTVEDNGLSGDDYAPHGGSFPINVKGTGCIGAVTVSGLPQRDDHNLVVEALALMLAKDLDTLRLAPL.

The protein belongs to the UPF0303 family.

This chain is UPF0303 protein RHECIAT_CH0003058, found in Rhizobium etli (strain CIAT 652).